The following is a 458-amino-acid chain: ATP synthase subunit beta (458 aa).

Residue 148–155 participates in ATP binding; that stretch reads GGAGVGKT.

The protein belongs to the ATPase alpha/beta chains family. In terms of assembly, F-type ATPases have 2 components, CF(1) - the catalytic core - and CF(0) - the membrane proton channel. CF(1) has five subunits: alpha(3), beta(3), gamma(1), delta(1), epsilon(1). CF(0) has three main subunits: a(1), b(2) and c(9-12). The alpha and beta chains form an alternating ring which encloses part of the gamma chain. CF(1) is attached to CF(0) by a central stalk formed by the gamma and epsilon chains, while a peripheral stalk is formed by the delta and b chains.

Its subcellular location is the cell inner membrane. The enzyme catalyses ATP + H2O + 4 H(+)(in) = ADP + phosphate + 5 H(+)(out). In terms of biological role, produces ATP from ADP in the presence of a proton gradient across the membrane. The catalytic sites are hosted primarily by the beta subunits. This chain is ATP synthase subunit beta, found in Nitrosococcus oceani (strain ATCC 19707 / BCRC 17464 / JCM 30415 / NCIMB 11848 / C-107).